The primary structure comprises 439 residues: Xylose isomerase (439 aa).

Active-site residues include H101 and D104. E232, E268, H271, D296, D307, D309, and D339 together coordinate Mg(2+).

It belongs to the xylose isomerase family. Homotetramer. Requires Mg(2+) as cofactor.

Its subcellular location is the cytoplasm. It catalyses the reaction alpha-D-xylose = alpha-D-xylulofuranose. The sequence is that of Xylose isomerase from Yersinia enterocolitica serotype O:8 / biotype 1B (strain NCTC 13174 / 8081).